The following is a 663-amino-acid chain: MGLYRVRVSTGSSFCAGSNNQVHLWLVGEHGEAALGWRLRPARGKEVEFQVDVSEYLGRLLFVKLRKRHLLSDDAWFCNWISVQGPGASGNEFRFPCYRWVEGDGILSLPEGTGRTVVDDPQGLFKKHREEELAERRKLYRWGNWKDGLILNIAGATINDLPVDERFLEDKRIDFEASLTKGLADLAIKDSLNILTCWKSLDDFNRIFWCGQSKLAERVRDSWKEDALFGYQFLNGTNPMLLRRSVRLPARLEFPPGMGELQAELEKELQQGTLFEADFSLLDGIKANVILCTQQYVAAPLVMLKLQPDGKLLPMAIQLQLPHKGSPPPPLFLPTDPPMTWLLAKCWVRSSDFQLHELHSHLLRGHLVAEVIAVATMRCLPSIHPMFKLLIPHLRYTMEINIRARTGLVSDSGVFDQVVSTGGGGHVELLQRAGAFLTYSSFCPPDDLADRGLLGVKSSFYAQDALRLWEILSRYVEGIVSLHYKTDESVRDDIELQAWCRDITEIGLLGAQDRGFPVTLQSKDQLCHFVTMCIFTCTGQHSSTHLGQLDWYSWVPNAPCTMRLPPPTTKDVTLEKVMATLPNFHQASLQMSITWQLGRRQPIMVALGQHEEEYFSGPEPKAVLKKFREELAALEKDIEIRNAQLDWPYEYLRPSLVENSVAI.

One can recognise a PLAT domain in the interval 2 to 115 (GLYRVRVSTG…ILSLPEGTGR (114 aa)). A Lipoxygenase domain is found at 116–663 (TVVDDPQGLF…PSLVENSVAI (548 aa)). Residues H361, H366, H541, H545, and I663 each contribute to the Fe cation site.

Belongs to the lipoxygenase family. Interacts with PEBP1; in response to IL13/interleukin-13, prevents the interaction of PEBP1 with RAF1 to activate the ERK signaling cascade. Fe cation is required as a cofactor. In terms of tissue distribution, detected in tracheal epithelium.

Its subcellular location is the cytoplasm. It localises to the cytosol. The protein localises to the cell membrane. It is found in the lipid droplet. It catalyses the reaction (5Z,8Z,11Z,14Z)-eicosatetraenoate + O2 = (12S)-hydroperoxy-(5Z,8Z,10E,14Z)-eicosatetraenoate. The catalysed reaction is (5Z,8Z,11Z,14Z)-eicosatetraenoate + O2 = (15S)-hydroperoxy-(5Z,8Z,11Z,13E)-eicosatetraenoate. It carries out the reaction (9Z,12Z)-octadecadienoate + O2 = (13S)-hydroperoxy-(9Z,11E)-octadecadienoate. The enzyme catalyses (5Z,8Z,11Z,14Z)-eicosatetraenoate + 2 O2 = (14R,15S)-dihydroperoxy-(5Z,8Z,10E,12E)-eicosatetraenoate. It catalyses the reaction (5Z,8Z,11Z,14Z)-eicosatetraenoate + 2 O2 = (8S,15S)-dihydroperoxy-(5Z,9E,11Z,13E)-eicosatetraenoate. The catalysed reaction is (14S,15R)-epoxy-(5Z,8Z,11Z)-eicosatrienoate + O2 = (8S)-hydroperoxy-(14S,15R)-epoxy-(5Z,9E,11Z)-eicosatrienoate. It carries out the reaction (14S,15R)-epoxy-(5Z,8Z,11Z)-eicosatrienoate + O2 = (12S)-hydroperoxy-(14S,15R)-epoxy-(5Z,8Z,10E)-eicosatrienoate. The enzyme catalyses (14R,15S)-epoxy-(5Z,8Z,11Z)-eicosatrienoate + O2 = (5S)-hydroperoxy-(14R,15S)-epoxy-(6E,8Z,11Z)-eicosatrienoate. It catalyses the reaction (14R,15S)-epoxy-(5Z,8Z,11Z)-eicosatrienoate + O2 = (12S)-hydroperoxy-(14R,15S)-epoxy-(5Z,8Z,10E)-eicosatrienoate. The catalysed reaction is (15R)-hydroperoxy-(5Z,8Z,11Z,13E)-eicosatetraenoate = 15-oxo-(5Z,8Z,11Z,13E)-eicosatetraenoate + H2O. It carries out the reaction (15S)-hydroperoxy-(5Z,8Z,11Z,13E)-eicosatetraenoate = (14S,15S)-epoxy-(5Z,8Z,10E,12E)-eicosatetraenoate + H2O. The enzyme catalyses (12S)-hydroperoxy-(5Z,8Z,10E,14Z)-eicosatetraenoate = (8S)-hydroxy-(11S,12S)-epoxy-(5Z,9E,14Z)-eicosatrienoate. It catalyses the reaction (4Z,7Z,10Z,13Z,16Z)-docosapentaenoate + O2 = 14-hydroperoxy-(4Z,7Z,10Z,12E,16Z)-docosapentaenoate. The catalysed reaction is (7Z,10Z,13Z,16Z,19Z)-docosapentaenoate + O2 = 14-hydroperoxy-(7Z,10Z,12E,16Z,19Z)-docosapentaenoate. It carries out the reaction (4Z,7Z,10Z,13Z,16Z,19Z)-docosahexaenoate + O2 = (14S)-hydroperoxy-(4Z,7Z,10Z,12E,16Z,19Z)-docosahexaenoate. The enzyme catalyses (4Z,7Z,10Z,13Z,16Z,19Z)-docosahexaenoate + O2 = (17S)-hydroperoxy-(4Z,7Z,10Z,13Z,15E,19Z)-docosahexaenoate. It catalyses the reaction (7S)-hydroperoxy-(4Z,8E,10Z,13Z,16Z,19Z)-docosahexaenoate + O2 = (7S,14S)-dihydroperoxy-(4Z,8E,10Z,12E,16Z,19Z)-docosahexaenoate. The catalysed reaction is (7S)-hydroperoxy-(4Z,8E,10Z,13Z,16Z,19Z)-docosahexaenoate + O2 = (7S,17S)-dihydroperoxy-(4Z,8E,10Z,13Z,15E,19Z)-docosahexaenoate. It carries out the reaction (4Z,7Z,10Z,13Z,16Z,19Z)-docosahexaenoate + O2 = (11S)-hydroperoxy-(4Z,7Z,9E,13Z,16Z,19Z)-docosahexaenoate. The enzyme catalyses N-(5Z,8Z,11Z,14Z)-eicosatetraenoyl-taurine + O2 = N-(12S)-hydroperoxy-(5Z,8Z,10E,14Z)-eicosatetraenoyl-taurine. It catalyses the reaction N-(5Z,8Z,11Z,14Z)-eicosatetraenoyl-gamma-aminobutanoate + O2 = N-(12S)-hydroperoxy-(5Z,8Z,10E,14Z)-eicosatetraenoyl-gamma-aminobutanoate. The catalysed reaction is N-(5Z,8Z,11Z,14Z)-eicosatetraenoyl-glycine + O2 = N-(12S)-hydroperoxy-(5Z,8Z,10E,14Z)-eicosatetraenoyl-glycine. It carries out the reaction N-(5Z,8Z,11Z,14Z)-eicosatetraenoyl-L-alanine + O2 = N-(12S)-hydroperoxy-(5Z,8Z,10E,14Z)-eicosatetraenoyl-alanine. The enzyme catalyses N-(5Z,8Z,11Z,14Z)-eicosatetraenoyl-taurine + O2 = N-(15S)-hydroperoxy-(5Z,8Z,11Z,13E)-eicosatetraenoyl-taurine. It catalyses the reaction N-(5Z,8Z,11Z,14Z)-eicosatetraenoyl-gamma-aminobutanoate + O2 = N-(15S)-hydroperoxy-(5Z,8Z,11Z,13E)-eicosatetraenoyl-gamma-aminobutanoate. The catalysed reaction is N-(5Z,8Z,11Z,14Z)-eicosatetraenoyl-glycine + O2 = N-(15S)-hydroperoxy-(5Z,8Z,11Z,13E)-eicosatetraenoyl-glycine. It carries out the reaction N-(5Z,8Z,11Z,14Z)-eicosatetraenoyl-L-alanine + O2 = N-(15S)-hydroperoxy-(5Z,8Z,11Z,13E)-eicosatetraenoyl-alanine. It functions in the pathway lipid metabolism; hydroperoxy eicosatetraenoic acid biosynthesis. Its function is as follows. Non-heme iron-containing dioxygenase that catalyzes the stereo-specific peroxidation of free and esterified polyunsaturated fatty acids generating a spectrum of bioactive lipid mediators. It inserts peroxyl groups at C12 or C15 of arachidonate ((5Z,8Z,11Z,14Z)-eicosatetraenoate) producing both 12-hydroperoxyeicosatetraenoate/12-HPETE and 15-hydroperoxyeicosatetraenoate/15-HPETE. It may then act on 12-HPETE to produce hepoxilins, which may show pro-inflammatory properties. Can also peroxidize linoleate ((9Z,12Z)-octadecadienoate) to 13-hydroperoxyoctadecadienoate. May participate in the sequential oxidations of DHA ((4Z,7Z,10Z,13Z,16Z,19Z)-docosahexaenoate) to generate specialized pro-resolving mediators (SPMs)like resolvin D5 ((7S,17S)-diHPDHA) and (7S,14S)-diHPDHA, that actively down-regulate the immune response and have anti-aggregation properties with platelets. Can convert epoxy fatty acids to hydroperoxy-epoxides derivatives followed by an intramolecular nucleophilic substitution leading to the formation of monocyclic endoperoxides. Plays an important role during the maintenance of self-tolerance by peroxidizing membrane-bound phosphatidylethanolamine which can then signal the sorting process for clearance of apoptotic cells during inflammation and prevent an autoimmune response. In addition to its role in the immune and inflammatory responses, this enzyme may play a role in epithelial wound healing in the cornea through production of lipoxin A4 (LXA(4)) and docosahexaenoic acid-derived neuroprotectin D1 (NPD1; 10R,17S-HDHA), both lipid autacoids exhibit anti-inflammatory and neuroprotective properties. Furthermore, it may regulate actin polymerization which is crucial for several biological processes such as the phagocytosis of apoptotic cells. It is also implicated in the generation of endogenous ligands for peroxisome proliferator activated receptor (PPAR-gamma), hence modulating macrophage development and function. It may also exert a negative effect on skeletal development by regulating bone mass through this pathway. As well as participates in ER stress and downstream inflammation in adipocytes, pancreatic islets, and liver. Finally, it is also involved in the cellular response to IL13/interleukin-13. This is Polyunsaturated fatty acid lipoxygenase ALOX15 from Bos taurus (Bovine).